The sequence spans 249 residues: 5'-nucleotidase SurE (249 aa).

A divalent metal cation is bound by residues Asp8, Asp9, Ser39, and Asn91.

It belongs to the SurE nucleotidase family. A divalent metal cation is required as a cofactor.

The protein localises to the cytoplasm. It catalyses the reaction a ribonucleoside 5'-phosphate + H2O = a ribonucleoside + phosphate. Nucleotidase that shows phosphatase activity on nucleoside 5'-monophosphates. This is 5'-nucleotidase SurE from Pseudomonas aeruginosa (strain UCBPP-PA14).